A 270-amino-acid chain; its full sequence is Phosphatidylglycerol--prolipoprotein diacylglyceryl transferase (270 aa).

Helical transmembrane passes span 17 to 37 (LAIRWYGLMYLAGFIMFLWFG), 59 to 79 (MLFYGVLGVILGGRLGYVLFY), 95 to 115 (WEGGMAFHGGFLGVLIAMWVF), 129 to 149 (FIAPMIPCGLAAGRIGNFING), 175 to 195 (PSQLYQFAGEGVALFIILWLF), 202 to 222 (MGAVSGVFLIGYGAFRFLAEF), and 237 to 257 (LSMGQWLSLPMIVIGAVMVVW). Residue Arg-142 participates in a 1,2-diacyl-sn-glycero-3-phospho-(1'-sn-glycerol) binding.

Belongs to the Lgt family.

The protein resides in the cell inner membrane. It catalyses the reaction L-cysteinyl-[prolipoprotein] + a 1,2-diacyl-sn-glycero-3-phospho-(1'-sn-glycerol) = an S-1,2-diacyl-sn-glyceryl-L-cysteinyl-[prolipoprotein] + sn-glycerol 1-phosphate + H(+). It functions in the pathway protein modification; lipoprotein biosynthesis (diacylglyceryl transfer). Functionally, catalyzes the transfer of the diacylglyceryl group from phosphatidylglycerol to the sulfhydryl group of the N-terminal cysteine of a prolipoprotein, the first step in the formation of mature lipoproteins. This Cupriavidus metallidurans (strain ATCC 43123 / DSM 2839 / NBRC 102507 / CH34) (Ralstonia metallidurans) protein is Phosphatidylglycerol--prolipoprotein diacylglyceryl transferase.